An 85-amino-acid chain; its full sequence is Antitoxin VapB31 (85 aa).

In terms of biological role, antitoxin component of a type II toxin-antitoxin (TA) system. Upon expression in M.smegmatis neutralizes the effect of cognate toxin VapC31. In Mycobacterium tuberculosis (strain ATCC 25618 / H37Rv), this protein is Antitoxin VapB31 (vapB31).